Reading from the N-terminus, the 355-residue chain is uncharacterized protein (355 aa).

Residues 1-104 (MGTKGLPLYP…EQAKTVQGGR (104 aa)) form a disordered region. Lys19 carries the N6-acetyllysine modification. Residues 45-54 (EEGTDLEGDM) show a composition bias toward acidic residues. Phosphoserine is present on Ser175. Disordered regions lie at residues 247–310 (PRGS…AAYK) and 325–355 (SITS…GKKP). A Phosphotyrosine modification is found at Tyr293. The residue at position 294 (Ser294) is a Phosphoserine. The segment covering 325–334 (SITSLSSRTT) has biased composition (polar residues). Low complexity predominate over residues 336–348 (LPAADPFALAPFP).

This is an uncharacterized protein from Homo sapiens (Human).